The primary structure comprises 858 residues: KN motif and ankyrin repeat domain-containing protein 2 (858 aa).

The interval 1-29 (MAQVLHVSAPFPGTPGPASPPAFPSKEPD) is disordered. An interaction with AIFM1 region spans residues 1–72 (MAQVLHVSAP…AVQRRPRLGS (72 aa)). A compositionally biased stretch (pro residues) spans 12 to 23 (PGTPGPASPPAF). Ser19, Ser83, Ser86, Ser89, and Ser92 each carry phosphoserine. Arg105 is modified (omega-N-methylarginine). The interval 140-182 (AAPAGLGSLTPSAAGSTSSLVGVGLPPPTPRGSGLSTPVPPSA) is disordered. A compositionally biased stretch (polar residues) spans 148–159 (LTPSAAGSTSSL). Thr168 is modified (phosphothreonine). Coiled coils occupy residues 183–234 (GHLA…KSQK) and 282–313 (EAAL…QADL). Position 323 is a phosphoserine (Ser323). Thr329 carries the post-translational modification Phosphothreonine. Ser356 and Ser375 each carry phosphoserine. 2 disordered regions span residues 412–451 (CDGA…PAHD) and 488–590 (QKEE…SSAK). The segment covering 421-435 (APAESSLSPPESEGA) has biased composition (low complexity). The span at 436 to 446 (TQAQPEKNTGQ) shows a compositional bias: polar residues. A compositionally biased stretch (basic and acidic residues) spans 488-499 (QKEEPTDPEAHR). Residues 509–528 (GSISPRYESSSEDSSTAENF) show a composition bias toward low complexity. Position 547 is a phosphoserine (Ser547). Residues 555 to 569 (RPKETAKAKTSREES) show a composition bias toward basic and acidic residues. At Thr559 the chain carries Phosphothreonine. One copy of the ANK 0; degenerate repeat lies at 621-658 (RELKVAYTTVLQEWLRLACRSDAHPELVRRHLVTFRAM). ANK repeat units follow at residues 673-703 (NGNT…QVDK), 707-740 (AGYS…DVNA), 745-774 (AGQT…DVNV), 778-808 (DGST…DISI), and 812-842 (DGST…KCSF). Residues 676-842 (TALHYSVSHA…YSRMNIKCSF (167 aa)) form an interaction with NCOA1 region.

As to quaternary structure, interacts (non-phosphorylated form) with NCOA1; NCOA2 AND NCOA3. Interacts with AIFM1. Interacts with ARHGDIA; the interaction is direct and may regulate the interaction of ARHGDIA with RHOA, RAC1 and CDC42. Interacts (via ANK repeats 1-5) with KIF21A. Phosphorylated by casein kinase II upon estrogen stimulation. Phosphorylation induces the release by KANK2 of NCOA1 and its translocation to the nucleus where NCOA1 can activate gene transcription.

Its subcellular location is the cytoplasm. It localises to the mitochondrion. Functionally, involved in transcription regulation by sequestering in the cytoplasm nuclear receptor coactivators such as NCOA1, NCOA2 and NCOA3. Involved in regulation of caspase-independent apoptosis by sequestering the proapoptotic factor AIFM1 in mitochondria. Pro-apoptotic stimuli can induce its proteasomal degradation allowing the translocation of AIFM1 to the nucleus to induce apoptosis. Involved in the negative control of vitamin D receptor signaling pathway. Involved in actin stress fibers formation through its interaction with ARHGDIA and the regulation of the Rho signaling pathway. May thereby play a role in cell adhesion and migration, regulating for instance podocytes migration during development of the kidney. Through the Rho signaling pathway may also regulate cell proliferation. The chain is KN motif and ankyrin repeat domain-containing protein 2 (KANK2) from Bos taurus (Bovine).